The following is an 84-amino-acid chain: Putative membrane protein insertion efficiency factor (84 aa).

The disordered stretch occupies residues 64-84; sequence GGSGYDPPPPRHQPRKWKCEE. Residues 75-84 are compositionally biased toward basic residues; sequence HQPRKWKCEE.

This sequence belongs to the UPF0161 family.

The protein localises to the cell inner membrane. Its function is as follows. Could be involved in insertion of integral membrane proteins into the membrane. This chain is Putative membrane protein insertion efficiency factor, found in Caulobacter vibrioides (strain ATCC 19089 / CIP 103742 / CB 15) (Caulobacter crescentus).